The sequence spans 367 residues: DNA replication and repair protein RecF (367 aa).

ATP is bound at residue 30 to 37 (GANGSGKT).

The protein belongs to the RecF family.

The protein resides in the cytoplasm. Its function is as follows. The RecF protein is involved in DNA metabolism; it is required for DNA replication and normal SOS inducibility. RecF binds preferentially to single-stranded, linear DNA. It also seems to bind ATP. This chain is DNA replication and repair protein RecF, found in Pseudomonas fluorescens (strain Pf0-1).